Here is a 330-residue protein sequence, read N- to C-terminus: D-alanine--D-alanine ligase (330 aa).

Residues 122–323 (NRFLSGFGIR…MKEVLCTIIR (202 aa)) enclose the ATP-grasp domain. 151 to 206 (TARMGLPLFVKPNVGGSSIATTKVVEAAQLLPAIGQAFSEGEEVMIERLICGTEVT) provides a ligand contact to ATP. Mg(2+) is bound by residues Asp277, Glu290, and Asn292.

It belongs to the D-alanine--D-alanine ligase family. Mg(2+) serves as cofactor. The cofactor is Mn(2+).

The protein resides in the cytoplasm. The catalysed reaction is 2 D-alanine + ATP = D-alanyl-D-alanine + ADP + phosphate + H(+). Its pathway is cell wall biogenesis; peptidoglycan biosynthesis. Cell wall formation. This Porphyromonas gingivalis (strain ATCC 33277 / DSM 20709 / CIP 103683 / JCM 12257 / NCTC 11834 / 2561) protein is D-alanine--D-alanine ligase.